Consider the following 277-residue polypeptide: NAD kinase (277 aa).

Asp67 serves as the catalytic Proton acceptor. NAD(+) contacts are provided by residues 67-68 (DG), Arg72, 137-138 (NE), Lys148, Arg165, Asp167, 178-183 (TGYAMS), Leu202, and Gln236.

Belongs to the NAD kinase family. It depends on a divalent metal cation as a cofactor.

Its subcellular location is the cytoplasm. The catalysed reaction is NAD(+) + ATP = ADP + NADP(+) + H(+). In terms of biological role, involved in the regulation of the intracellular balance of NAD and NADP, and is a key enzyme in the biosynthesis of NADP. Catalyzes specifically the phosphorylation on 2'-hydroxyl of the adenosine moiety of NAD to yield NADP. The polypeptide is NAD kinase (Pyrococcus abyssi (strain GE5 / Orsay)).